We begin with the raw amino-acid sequence, 331 residues long: Protoheme IX farnesyltransferase (331 aa).

The next 8 membrane-spanning stretches (helical) occupy residues 63–83, 109–129, 132–152, 160–180, 188–208, 215–235, 241–261, and 294–314; these read LACT…LNCL, SVFI…VSGV, LAAG…TAFL, IVFG…AAAG, WLFS…AILL, VGIP…AISV, VFLS…YGIL, and ILYM…VSIV.

The protein belongs to the UbiA prenyltransferase family. Protoheme IX farnesyltransferase subfamily.

It localises to the cell inner membrane. It catalyses the reaction heme b + (2E,6E)-farnesyl diphosphate + H2O = Fe(II)-heme o + diphosphate. It participates in porphyrin-containing compound metabolism; heme O biosynthesis; heme O from protoheme: step 1/1. In terms of biological role, converts heme B (protoheme IX) to heme O by substitution of the vinyl group on carbon 2 of heme B porphyrin ring with a hydroxyethyl farnesyl side group. This is Protoheme IX farnesyltransferase from Prochlorococcus marinus (strain NATL1A).